We begin with the raw amino-acid sequence, 329 residues long: tRNA (guanine(10)-N2)-dimethyltransferase (329 aa).

The THUMP domain maps to 40 to 143 (NVENVEIFER…KLWIGIRIRE (104 aa)).

Belongs to the methyltransferase superfamily. Trm-G10 family. Monomer.

Its subcellular location is the cytoplasm. It carries out the reaction guanosine(10) in tRNA + 2 S-adenosyl-L-methionine = N(2)-dimethylguanosine(10) in tRNA + 2 S-adenosyl-L-homocysteine + 2 H(+). In terms of biological role, catalyzes the adenosylmethionine-dependent methylation of the exocyclic amino group (N(2)) of guanosine at position 10 of various tRNAs. Acts via a two-step process that leads to the formation of either N(2)-monomethyl (m(2)G) or N(2)-dimethylguanosine (m(2)(2)G). This chain is tRNA (guanine(10)-N2)-dimethyltransferase (trmG10), found in Pyrococcus abyssi (strain GE5 / Orsay).